Reading from the N-terminus, the 403-residue chain is Argininosuccinate synthase (403 aa).

Residues 10–18 (AYSGGLDTS) and Ala-37 contribute to the ATP site. Residues Tyr-88 and Ser-93 each contribute to the L-citrulline site. Position 118 (Gly-118) interacts with ATP. L-aspartate-binding residues include Thr-120, Asn-124, and Asp-125. L-citrulline is bound at residue Asn-124. 5 residues coordinate L-citrulline: Arg-128, Ser-178, Ser-187, Glu-263, and Tyr-275.

This sequence belongs to the argininosuccinate synthase family. Type 1 subfamily. In terms of assembly, homotetramer.

The protein resides in the cytoplasm. It catalyses the reaction L-citrulline + L-aspartate + ATP = 2-(N(omega)-L-arginino)succinate + AMP + diphosphate + H(+). Its pathway is amino-acid biosynthesis; L-arginine biosynthesis; L-arginine from L-ornithine and carbamoyl phosphate: step 2/3. The polypeptide is Argininosuccinate synthase (Marinobacter nauticus (strain ATCC 700491 / DSM 11845 / VT8) (Marinobacter aquaeolei)).